Consider the following 186-residue polypeptide: Ribosome-recycling factor (186 aa).

It belongs to the RRF family.

It is found in the cytoplasm. Responsible for the release of ribosomes from messenger RNA at the termination of protein biosynthesis. May increase the efficiency of translation by recycling ribosomes from one round of translation to another. The protein is Ribosome-recycling factor of Burkholderia ambifaria (strain ATCC BAA-244 / DSM 16087 / CCUG 44356 / LMG 19182 / AMMD) (Burkholderia cepacia (strain AMMD)).